The sequence spans 244 residues: Phosphatidylinositol phosphate synthase (244 aa).

The next 3 helical transmembrane spans lie at 24-42 (YARAFFTRVLTPFAAFLIR), 49-66 (TVTLLGTAGVIAGALVFY), and 72-91 (FWGTIVITLFVFSDLVDGNM). 48–51 (DTVT) lines the a CDP-1,2-diacyl-sn-glycerol pocket. Residues aspartate 85 and aspartate 88 each contribute to the Mg(2+) site. A CDP-1,2-diacyl-sn-glycerol is bound by residues glycine 89, arginine 93, and serine 99. Mg(2+) is bound by residues aspartate 106 and aspartate 110. The active-site Proton acceptor is the aspartate 110. A run of 3 helical transmembrane segments spans residues 117-137 (IFGGFALWYAGGGDNNVLCAV), 174-190 (LVISLVAAGFAGLHKFG), and 196-214 (VLLPIALWIVAVGSLVTLI).

It belongs to the CDP-alcohol phosphatidyltransferase class-I family. Homodimer. It depends on Mg(2+) as a cofactor.

Its subcellular location is the cell membrane. It catalyses the reaction a CDP-1,2-diacyl-sn-glycerol + 1D-myo-inositol 3-phosphate = a 1,2-diacyl-sn-glycero-3-phospho-(1D-myo-inositol-3-phosphate) + CMP + H(+). The enzyme catalyses 1,2-di-(9Z-octadecenoyl)-sn-glycero-3-cytidine-5'-diphosphate + 1D-myo-inositol 3-phosphate = 1,2-di-(9Z-octadecenoyl)-sn-glycero-3-phospho-(1D-myo-inositol-3-phosphate) + CMP + H(+). The protein operates within phospholipid metabolism; phosphatidylinositol phosphate biosynthesis. In terms of biological role, catalyzes the conjugation of the 1'-hydroxyl group of D-myo-inositol-3-phosphate (also named L-myo-inositol-1-phosphate) with a lipid tail of cytidine diphosphate diacylglycerol (CDP-DAG), forming phosphatidylinositol phosphate (PIP) and CMP. PIP is a precursor of phosphatidylinositol (PI) which is an essential lipid required for cell wall formation. This is Phosphatidylinositol phosphate synthase from Streptomyces avermitilis (strain ATCC 31267 / DSM 46492 / JCM 5070 / NBRC 14893 / NCIMB 12804 / NRRL 8165 / MA-4680).